The sequence spans 134 residues: Small ribosomal subunit protein uS8c (134 aa).

It belongs to the universal ribosomal protein uS8 family. In terms of assembly, part of the 30S ribosomal subunit.

The protein resides in the plastid. It is found in the chloroplast. Functionally, one of the primary rRNA binding proteins, it binds directly to 16S rRNA central domain where it helps coordinate assembly of the platform of the 30S subunit. The polypeptide is Small ribosomal subunit protein uS8c (rps8) (Phaseolus angularis (Azuki bean)).